The primary structure comprises 487 residues: Glycogen synthase 2 (487 aa).

Residue K12 coordinates ADP-alpha-D-glucose.

Belongs to the glycosyltransferase 1 family. Bacterial/plant glycogen synthase subfamily.

It catalyses the reaction [(1-&gt;4)-alpha-D-glucosyl](n) + ADP-alpha-D-glucose = [(1-&gt;4)-alpha-D-glucosyl](n+1) + ADP + H(+). It functions in the pathway glycan biosynthesis; glycogen biosynthesis. Functionally, synthesizes alpha-1,4-glucan chains using ADP-glucose. The protein is Glycogen synthase 2 of Methylococcus capsulatus (strain ATCC 33009 / NCIMB 11132 / Bath).